The following is a 1536-amino-acid chain: Glycogen debranching enzyme (1536 aa).

Catalysis depends on residues D535, H538, and D670.

The protein belongs to the glycogen debranching enzyme family. In terms of assembly, interacts with IGD1.

Its subcellular location is the mitochondrion. It is found in the cytoplasm. It carries out the reaction Transfers a segment of a (1-&gt;4)-alpha-D-glucan to a new position in an acceptor, which may be glucose or a (1-&gt;4)-alpha-D-glucan.. It catalyses the reaction Hydrolysis of (1-&gt;6)-alpha-D-glucosidic branch linkages in glycogen phosphorylase limit dextrin.. Its activity is regulated as follows. Activity is inhibited by IGD1. Functionally, multifunctional enzyme acting as 1,4-alpha-D-glucan:1,4-alpha-D-glucan 4-alpha-D-glycosyltransferase and amylo-1,6-glucosidase in glycogen degradation. The protein is Glycogen debranching enzyme (GDB1) of Saccharomyces cerevisiae (strain ATCC 204508 / S288c) (Baker's yeast).